The sequence spans 1150 residues: Solute carrier family 12 member 6 (1150 aa).

The segment at 1 to 108 (MHPPEATTKM…GEHSQLLDDG (108 aa)) is disordered. Residues 1 to 135 (MHPPEATTKM…DEYFDKNLAL (135 aa)) lie on the Cytoplasmic side of the membrane. A compositionally biased stretch (low complexity) spans 28–45 (LSDTSPDLSSRSSSRVRF). S32 bears the Phosphoserine mark. A compositionally biased stretch (polar residues) spans 80–101 (DRTSNPQDVTEDPSQNSITGEH). S120 bears the Phosphoserine mark. The chain crosses the membrane as a discontinuously helical span at residues 136-158 (FEEEMDTRPKVSSLLNRMANYTN). 2 residues coordinate K(+): S147 and S148. Position 148 is a phosphoserine (S148). Chloride is bound at residue N151. At 159–165 (LTQGAKE) the chain is on the extracellular side. Residues 161-181 (QGAKEHEEAENITEGKKKPTK) are disordered. Over residues 163 to 177 (AKEHEEAENITEGKK) the composition is skewed to basic and acidic residues. The chain crosses the membrane as a helical span at residues 166 to 188 (HEEAENITEGKKKPTKSPQMGTF). At 189–211 (MGVYLPCLQNIFGVILFLRLTWV) the chain is on the cytoplasmic side. A helical membrane pass occupies residues 212-245 (VGTAGILQAFAIVLICCCCTMLTAISMSAIATNG). Over 246–263 (VVPAGGSYFMISRALGPE) the chain is Extracellular. 2 helical membrane passes run 264 to 287 (FGGA…ILGA) and 288 to 316 (IEIF…AMLN). K(+) is bound at residue Y283. Residues 317 to 433 (NMRVYGTAFL…FVHNNVISIQ (117 aa)) lie on the Extracellular side of the membrane. A disulfide bond links C375 and C390. Residues N379, N398, N411, and N417 are each glycosylated (N-linked (GlcNAc...) asparagine). C410 and C420 form a disulfide bridge. A helical transmembrane segment spans residues 434 to 454 (GIPGLASGIITENLWSNYLPK). K(+) contacts are provided by I443, T444, and N446. I443 and T444 together coordinate chloride. Positions 447 and 448 each coordinate chloride. The Cytoplasmic segment spans residues 455–464 (GEIIEKPSAK). The helical transmembrane segment at 465 to 487 (SSDVLGNLNHEYVLADITTSFTL) threads the bilayer. Residues 488 to 518 (LVGIFFPSVTGIMAGSNRSGDLKDAQKSIPI) are Extracellular-facing. T497 serves as a coordination point for K(+). The helical transmembrane segment at 519–545 (GTILAILTTSFVYLSNVVLFGACIEGV) threads the bilayer. Over 546-568 (VLRDKFGDAVKGNLVVGTLSWPS) the chain is Cytoplasmic. The next 2 membrane-spanning stretches (helical) occupy residues 569–589 (PWVI…QSLT) and 590–612 (GAPR…VFGH). I603 contributes to the chloride binding site. Residues 613–629 (SKANGEPTWALLLTAAI) lie on the Cytoplasmic side of the membrane. The next 2 membrane-spanning stretches (helical) occupy residues 630-649 (AELG…LSMF) and 650-665 (FLMC…ALQT). Y654 is a binding site for chloride. Residues 666-1150 (LLRTPNWRPR…GGSEVITIYS (485 aa)) are Cytoplasmic-facing. Residues 682 to 691 (ALSFMGMSIC) form a scissor helix region. At S736 the chain carries Phosphoserine. T778 carries the post-translational modification Phosphothreonine. Position 981 is a phosphoserine (S981). T991 bears the Phosphothreonine mark. Phosphoserine is present on residues S1023, S1029, and S1032. Position 1048 is a phosphothreonine (T1048). Y1121 is subject to Phosphotyrosine.

This sequence belongs to the SLC12A transporter family. K/Cl co-transporter subfamily. In terms of assembly, homodimer; adopts a domain-swap conformation at the scissor helices connecting the transmembrane domain and C-terminal domain. Heterodimer with K-Cl cotransporter SLC12A5. Interacts (via C-terminus) with CKB; the interaction may be required for potassium-chloride cotransport activity. Phosphorylated, phosphorylation regulates transporter activity. Phosphorylated at Thr-991 and Thr-1048 by OXSR1/OSR1 and STK39/SPAK downstream of WNK kinases (WNK1, WNK2, WNK3 or WNK4), inhibiting the potassium-chloride cotransport activity. Post-translationally, N-glycosylated. In terms of tissue distribution, expressed in hippocampus and corpus callosum (at protein level). Highly expressed throughout the brain and detected at lower levels in kidney. Highly expressed in highly myelinated white matter of the brain, but not in gray matter. Detected in the corpus callosum, in packed cell layers of the hippocampus and in Purkinje neurons within the cerebellum. Highly expressed in white matter in the spinal cord, but not in dorsal root ganglia or sciatic nerve. Colocalizes with the oligodendrocyte marker CNP. Expressed in hippocampus in CA1, and to a lesser extent CA3 pyramidal cells. Also expressed in cortex, mostly in large neurons and in the large cerebellar Purkinje cells. Highly expressed in kidney, but not detected in brain.

It localises to the cell membrane. The protein localises to the basolateral cell membrane. It catalyses the reaction K(+)(in) + chloride(in) = K(+)(out) + chloride(out). Inhibited following phosphorylation by OXSR1/OSR1 and STK39/SPAK: phosphorylation takes place downstream of WNK kinases (WNK1, WNK2, WNK3 or WNK4) in response to hyperosmotic stress and subsequent cell shrinkage. In terms of biological role, mediates electroneutral potassium-chloride cotransport when activated by cell swelling. May contribute to cell volume homeostasis in single cells. Its function is as follows. Mediates electroneutral potassium-chloride cotransport when activated by cell swelling. May contribute to cell volume homeostasis in single cells. The sequence is that of Solute carrier family 12 member 6 (Slc12a6) from Mus musculus (Mouse).